The primary structure comprises 319 residues: Proline hydroxylase buaE (319 aa).

In terms of domain architecture, Fe2OG dioxygenase spans 168 to 280 (NSSELRLNHY…RYSIAYFGKP (113 aa)). 3 residues coordinate Fe cation: histidine 195, aspartate 197, and histidine 255. Arginine 271 serves as a coordination point for 2-oxoglutarate.

Belongs to the iron/ascorbate-dependent oxidoreductase family. Requires Fe(2+) as cofactor.

It functions in the pathway mycotoxin biosynthesis. In terms of biological role, proline hydroxylase; part of the gene cluster that mediates the biosynthesis of burnettramic acids, an unusual class of bolaamphiphilic pyrrolizidinediones that display potent antibacterial, antifungal, and cytotoxic activities. The first step of the biosynthesis of burnettramic acids is the hydroxylation of proline by the proline hydroxylase buaE to generate 4-hydroxyproline. The PKS-NRPS buaA and trans-enoyl reductase buaC construct the highly reduced polyketide chain, and the condensation (C) domain of buaA then catalyzes the amide bond formation with the activated 4-hydroxyproline. This is followed by the R domain releasing the nascent polyketide-peptide directly via a Dieckmann condensation to afford a tetramic acid fused to the hydroxyproline, generating the bicyclic pyrrolidinedione moiety. The cytochrome P450 monooxygenases buaD and buaG are likely responsible for the multiple hydroxylations on the polyketide chain and its terminus, although in the heterologous context, buaD does not appear to be required. Therefore, while buaG may be a multifunctional cytochrome P450 monooxygenase, it cannot be ruled out that the two secondary alcohols on the polyketide chain could have an acetate origin. Finally, the glycosyltransferase buaB transfers beta-D-mannose to the aglycone burnettramic acid A to form burnettramic acid A. Burnettramic acid B is a minor cis-pyrrolizidine epimer of burnettramic acid A and it is likely that small amounts of it form naturally in acidic environments. The chain is Proline hydroxylase buaE from Petromyces alliaceus (Aspergillus alliaceus).